We begin with the raw amino-acid sequence, 805 residues long: Leucine--tRNA ligase (805 aa).

The short motif at 40-51 (PYPSGQGLHVGH) is the 'HIGH' region element. The 'KMSKS' region signature appears at 577–581 (KMSKS). Lys580 is a binding site for ATP.

The protein belongs to the class-I aminoacyl-tRNA synthetase family.

It localises to the cytoplasm. It carries out the reaction tRNA(Leu) + L-leucine + ATP = L-leucyl-tRNA(Leu) + AMP + diphosphate. This is Leucine--tRNA ligase from Limosilactobacillus fermentum (strain NBRC 3956 / LMG 18251) (Lactobacillus fermentum).